A 337-amino-acid chain; its full sequence is Tetraacyldisaccharide 4'-kinase (337 aa).

55–62 (NAGGTGKT) lines the ATP pocket.

This sequence belongs to the LpxK family.

It catalyses the reaction a lipid A disaccharide + ATP = a lipid IVA + ADP + H(+). The protein operates within glycolipid biosynthesis; lipid IV(A) biosynthesis; lipid IV(A) from (3R)-3-hydroxytetradecanoyl-[acyl-carrier-protein] and UDP-N-acetyl-alpha-D-glucosamine: step 6/6. In terms of biological role, transfers the gamma-phosphate of ATP to the 4'-position of a tetraacyldisaccharide 1-phosphate intermediate (termed DS-1-P) to form tetraacyldisaccharide 1,4'-bis-phosphate (lipid IVA). This chain is Tetraacyldisaccharide 4'-kinase, found in Dinoroseobacter shibae (strain DSM 16493 / NCIMB 14021 / DFL 12).